The chain runs to 134 residues: ATP synthase epsilon chain, chloroplastic (134 aa).

It belongs to the ATPase epsilon chain family. As to quaternary structure, F-type ATPases have 2 components, CF(1) - the catalytic core - and CF(0) - the membrane proton channel. CF(1) has five subunits: alpha(3), beta(3), gamma(1), delta(1), epsilon(1). CF(0) has three main subunits: a, b and c.

The protein localises to the plastid. The protein resides in the chloroplast thylakoid membrane. Produces ATP from ADP in the presence of a proton gradient across the membrane. The polypeptide is ATP synthase epsilon chain, chloroplastic (Pyropia yezoensis (Susabi-nori)).